The following is a 326-amino-acid chain: MYGIEYTTFLIYLISIILFNYILKSITRMMDYIIYKFLLIVTIASIVVNAQNYGINLPITGSMDASYVNATKDKPFLTSTLCLYYPTEARTEINDNEWTSTLSQLFLTKGWPTGSVYFKEYDDIATFSVDPQLYCDYNIVLMRYNSSLELDMSELANLILNEWLCNPMDITLYYYQQNGQANKWIAMGQSCTIKVCPLNTQTLGIGCQTTNTRTFEEVATAEKLVITDVVDGVNHKLDVTTATCTIRNCKKLGPRENVAVIQVGGADILDITSDPTTAPQTERMMRINWKKWWQVFYTIVDYVNQIVQAMSKRSRSLNSAAFYYRV.

The N-terminal stretch at 1-50 (MYGIEYTTFLIYLISIILFNYILKSITRMMDYIIYKFLLIVTIASIVVNA) is a signal peptide. N-linked (GlcNAc...) asparagine; by host glycosylation occurs at Asn69. Cysteines 82 and 135 form a disulfide. A Ca(2+)-binding site is contributed by Asp95. A glycan (N-linked (GlcNAc...) asparagine; by host) is linked at Asn145. The tract at residues 165 to 167 (CNP) is CNP motif; interaction with ITGAV/ITGB3. Disulfide bonds link Cys165-Cys249, Cys191-Cys244, and Cys196-Cys207. 7 residues coordinate Ca(2+): Gln177, Gly206, Thr214, Glu216, Asp228, Val229, and Asp231. Residues 237–239 (LDV) form an LVD motif; interaction with ITGA4/ITGB1 heterodimer region. The GPR motif; interaction with ITGAX/ITGB2 stretch occupies residues 253 to 255 (GPR). Ca(2+) is bound at residue Asp301.

This sequence belongs to the rotavirus VP7 family. As to quaternary structure, homotrimer; disulfide-linked. 2 Ca(2+) ions bound at each subunit interface in the trimer hold the trimer together. Interacts with the intermediate capsid protein VP6. Interacts with the outer capsid protein VP5*. Post-translationally, N-glycosylated. The N-terminus is blocked possibly by pyroglutamic acid.

The protein resides in the virion. It is found in the host endoplasmic reticulum lumen. In terms of biological role, calcium-binding protein that interacts with rotavirus cell receptors once the initial attachment by VP4 has been achieved. Rotavirus attachment and entry into the host cell probably involves multiple sequential contacts between the outer capsid proteins VP4 and VP7, and the cell receptors. Following entry into the host cell, low intracellular or intravesicular Ca(2+) concentration probably causes the calcium-stabilized VP7 trimers to dissociate from the virion. This step is probably necessary for the membrane-disrupting entry step and the release of VP4, which is locked onto the virion by VP7. In Rotavirus A (isolate RVA/Cow/Thailand/61A/1988/G10P7[5]) (RV-A), this protein is Outer capsid glycoprotein VP7.